The primary structure comprises 367 residues: Riboflavin biosynthesis protein RibD (367 aa).

The CMP/dCMP-type deaminase domain occupies 1-123 (MQDEYYMARA…RLQQAGIDVS (123 aa)). A deaminase region spans residues 1-145 (MQDEYYMARA…KGFLKRMRTG (145 aa)). His-50 provides a ligand contact to Zn(2+). The active-site Proton donor is the Glu-52. The Zn(2+) site is built by Cys-75 and Cys-84. The interval 146-367 (FPYIQLKLGA…PDVCLHLVGA (222 aa)) is reductase. 161–164 (TAMA) contacts NADP(+). Ser-168 provides a ligand contact to substrate. Residue Trp-170 coordinates NADP(+). Residue Arg-184 participates in substrate binding. The NADP(+) site is built by Thr-196 and Asp-200. Positions 204 and 207 each coordinate substrate. Ser-234 is a binding site for NADP(+). Position 299 (Glu-299) interacts with substrate. Residue 301–304 (GPTL) coordinates NADP(+).

This sequence in the N-terminal section; belongs to the cytidine and deoxycytidylate deaminase family. It in the C-terminal section; belongs to the HTP reductase family. Homodimer. It depends on Zn(2+) as a cofactor.

The catalysed reaction is 2,5-diamino-6-hydroxy-4-(5-phosphoribosylamino)-pyrimidine + H2O + H(+) = 5-amino-6-(5-phospho-D-ribosylamino)uracil + NH4(+). It catalyses the reaction 5-amino-6-(5-phospho-D-ribitylamino)uracil + NADP(+) = 5-amino-6-(5-phospho-D-ribosylamino)uracil + NADPH + H(+). It functions in the pathway cofactor biosynthesis; riboflavin biosynthesis; 5-amino-6-(D-ribitylamino)uracil from GTP: step 2/4. Its pathway is cofactor biosynthesis; riboflavin biosynthesis; 5-amino-6-(D-ribitylamino)uracil from GTP: step 3/4. Its function is as follows. Converts 2,5-diamino-6-(ribosylamino)-4(3h)-pyrimidinone 5'-phosphate into 5-amino-6-(ribosylamino)-2,4(1h,3h)-pyrimidinedione 5'-phosphate. This Escherichia coli (strain K12) protein is Riboflavin biosynthesis protein RibD (ribD).